A 537-amino-acid chain; its full sequence is Asparagine-rich protein (537 aa).

Disordered regions lie at residues 1–22 (YNNNNKNNNNNDDGNINYQNTN), 187–254 (NMNI…NNNF), 336–372 (YNNNESNTANPNQMNFEQTNNDNMKRENNNMNNYGYD), 399–479 (LNNN…DDWG), and 509–528 (DLSKKGNDGKNKKKNKMKKD). Low complexity-rich tracts occupy residues 336–347 (YNNNESNTANPN) and 399–469 (LNNN…NQNN). Acidic residues predominate over residues 470-479 (NEDEDDDDWG). Basic and acidic residues predominate over residues 509–518 (DLSKKGNDGK).

This is Asparagine-rich protein from Plasmodium falciparum.